A 34-amino-acid chain; its full sequence is Photosystem I reaction center subunit XII (34 aa).

The helical transmembrane segment at 9–29 (LIILGLIVVMHAGVLALRLGI) threads the bilayer.

Belongs to the PsaM family.

It localises to the cellular thylakoid membrane. The sequence is that of Photosystem I reaction center subunit XII from Prochlorococcus marinus subsp. pastoris (strain CCMP1986 / NIES-2087 / MED4).